Consider the following 176-residue polypeptide: Ribosome maturation factor RimM (176 aa).

Positions 97–176 (EDEFYWRDLI…QILVDWDPDF (80 aa)) constitute a PRC barrel domain.

It belongs to the RimM family. In terms of assembly, binds ribosomal protein uS19.

It localises to the cytoplasm. In terms of biological role, an accessory protein needed during the final step in the assembly of 30S ribosomal subunit, possibly for assembly of the head region. Essential for efficient processing of 16S rRNA. May be needed both before and after RbfA during the maturation of 16S rRNA. It has affinity for free ribosomal 30S subunits but not for 70S ribosomes. This is Ribosome maturation factor RimM from Shewanella sp. (strain MR-4).